Reading from the N-terminus, the 621-residue chain is Chaperone protein HtpG (621 aa).

The segment at 1-341 is a; substrate-binding; sequence MSNQEYTFQT…SEDLPLNVSR (341 aa). Residues 342–547 form a b region; that stretch reads EILQQNKILA…GDEPNAMMAN (206 aa). Residues 548–621 form a c region; sequence WMRQMGQSVP…RLNSVLLKAL (74 aa).

This sequence belongs to the heat shock protein 90 family. Homodimer.

The protein localises to the cytoplasm. Its function is as follows. Molecular chaperone. Has ATPase activity. This is Chaperone protein HtpG from Helicobacter pylori (strain J99 / ATCC 700824) (Campylobacter pylori J99).